A 145-amino-acid polypeptide reads, in one-letter code: Transcriptional anti-antiactivator ExsC (145 aa).

Homodimer. Interacts with ExsE. Interacts directly with ExsD to form a heterotetrameric complex.

The protein localises to the cytoplasm. With respect to regulation, in the absence of inducing signals, ExsE interacts with and inhibits ExsC activity. Its function is as follows. Part of the regulatory cascade that plays a role in the transcriptional regulation of the type III secretion system (T3SS). Interacts with antiactivator ExsD to inhibit its activity leading to ExsA-mediated transcription. The sequence is that of Transcriptional anti-antiactivator ExsC (exsC) from Pseudomonas aeruginosa (strain ATCC 15692 / DSM 22644 / CIP 104116 / JCM 14847 / LMG 12228 / 1C / PRS 101 / PAO1).